The chain runs to 204 residues: VEL1-related protein AC977.05c (204 aa).

Positions 1–17 (MIFKNLISLFFIGLATA) are cleaved as a signal peptide.

This sequence belongs to the VEL1 family.

It is found in the cytoplasm. The protein localises to the cytosol. This chain is VEL1-related protein AC977.05c, found in Schizosaccharomyces pombe (strain 972 / ATCC 24843) (Fission yeast).